Consider the following 310-residue polypeptide: METHFHEWQKSLQLIQQKSEELQREQIQLKSFERELRIINKWFYYGLHYEQKLQLARHPKRPTSLDYIEGMSQDWIELHGDRKGSDDQALITGIAQVEDETIVFLAHQKGRNTKENLQRNFGMPSPGGYRKALRIMNHANKFGLPLVTLIDTPGAWAGVEAEKEGQAHAIATCLQTMFSLEVPMISVIIGEGGSGGALAIGVSNWMMMLEHAVYTVATPEACAAILWKDASKSAEAAEALKIGAEDLLALGVIDEIIPEPIGCAHQDAASMTKRLKQKILRRLKQLKILSGKQLRAHRAERFRHLGYYVE.

The CoA carboxyltransferase C-terminal domain maps to 31–285 (SFERELRIIN…KQKILRRLKQ (255 aa)).

It belongs to the AccA family. Acetyl-CoA carboxylase is a heterohexamer composed of biotin carboxyl carrier protein (accB), biotin carboxylase (accC) and two subunits each of ACCase subunit alpha (accA) and ACCase subunit beta (accD).

Its subcellular location is the plastid. The protein localises to the chloroplast. The enzyme catalyses N(6)-carboxybiotinyl-L-lysyl-[protein] + acetyl-CoA = N(6)-biotinyl-L-lysyl-[protein] + malonyl-CoA. It functions in the pathway lipid metabolism; malonyl-CoA biosynthesis; malonyl-CoA from acetyl-CoA: step 1/1. Component of the acetyl coenzyme A carboxylase (ACC) complex. First, biotin carboxylase catalyzes the carboxylation of biotin on its carrier protein (BCCP) and then the CO(2) group is transferred by the carboxyltransferase to acetyl-CoA to form malonyl-CoA. The polypeptide is Acetyl-coenzyme A carboxylase carboxyl transferase subunit alpha (Cyanidioschyzon merolae (strain NIES-3377 / 10D) (Unicellular red alga)).